The chain runs to 259 residues: MTKVLIAGFAGAMGQQAVTLVKSLPGFELSAVVGHHLTDLDPTSYGLENSTTVYADREQVETGAADIWLDFTVPAAVFENVSYALRHGMAPVVGTTGLSDEQVEELQQLAKQNGLGGLIAPNFGMSAVLLMKFAKEAAAYFPEVEIIEMHHEDKKDAPSGTALATAKLISENRPAHETAPDSTESLPGARGGDYQGIKLHAVRLPGYVAHEQVLFGGSGEALTIRQDSFDRSSFMSGVKVGLEKVGTLTELVVGLENVL.

NAD(+) is bound by residues 8–13 (GFAGAM), 94–96 (GTT), and 120–123 (APNF). Histidine 150 functions as the Proton donor/acceptor in the catalytic mechanism. Histidine 151 contacts (S)-2,3,4,5-tetrahydrodipicolinate. Lysine 154 (proton donor) is an active-site residue. 160–161 (GT) lines the (S)-2,3,4,5-tetrahydrodipicolinate pocket.

The protein belongs to the DapB family.

The protein localises to the cytoplasm. It carries out the reaction (S)-2,3,4,5-tetrahydrodipicolinate + NAD(+) + H2O = (2S,4S)-4-hydroxy-2,3,4,5-tetrahydrodipicolinate + NADH + H(+). The enzyme catalyses (S)-2,3,4,5-tetrahydrodipicolinate + NADP(+) + H2O = (2S,4S)-4-hydroxy-2,3,4,5-tetrahydrodipicolinate + NADPH + H(+). The protein operates within amino-acid biosynthesis; L-lysine biosynthesis via DAP pathway; (S)-tetrahydrodipicolinate from L-aspartate: step 4/4. Functionally, catalyzes the conversion of 4-hydroxy-tetrahydrodipicolinate (HTPA) to tetrahydrodipicolinate. The chain is 4-hydroxy-tetrahydrodipicolinate reductase from Limosilactobacillus fermentum (strain NBRC 3956 / LMG 18251) (Lactobacillus fermentum).